Here is a 376-residue protein sequence, read N- to C-terminus: Pre-mRNA-splicing factor cwf25 (376 aa).

Positions 25–60 (KDEQAHKEEMKRVEQLRREIEEERQLLELHRLQEAA) form a coiled coil. Disordered stretches follow at residues 153 to 211 (LMEK…DRNN) and 258 to 289 (RTSR…ITQR). The segment covering 154–167 (MEKRKYSLDSDRKS) has biased composition (basic and acidic residues). The segment covering 168-178 (KERRHRDRHHR) has biased composition (basic residues). The span at 179–199 (SNQDRSRERSDNEQHSSDKRE) shows a compositional bias: basic and acidic residues. Phosphoserine occurs at positions 266 and 268. A coiled-coil region spans residues 286–334 (ITQRHTDIESRLQKMQDNAKELDESRRKKIELLEKKERDEEQFLEKERR).

It belongs to the CWC25 family. In terms of assembly, belongs to the 40S cdc5-associated complex (or cwf complex), a spliceosome sub-complex reminiscent of a late-stage spliceosome composed of the U2, U5 and U6 snRNAs and at least brr2, cdc5, cwf2/prp3, cwf3/syf1, cwf4/syf3, cwf5/ecm2, spp42/cwf6, cwf7/spf27, cwf8, cwf9, cwf10, cwf11, cwf12, prp45/cwf13, cwf14, cwf15, cwf16, cwf17, cwf18, cwf19, cwf20, cwf21, cwf22, cwf23, cwf24, cwf25, cwf26, cyp7/cwf27, cwf28, cwf29/ist3, lea1, msl1, prp5/cwf1, prp10, prp12/sap130, prp17, prp22, sap61, sap62, sap114, sap145, slu7, smb1, smd1, smd3, smf1, smg1 and syf2.

The protein resides in the nucleus. Involved in mRNA splicing. The chain is Pre-mRNA-splicing factor cwf25 (cwf25) from Schizosaccharomyces pombe (strain 972 / ATCC 24843) (Fission yeast).